The chain runs to 460 residues: MEFSEWYSDILEKAGIYDLRYPIKGCGVYLPYGFKIRRYSFEILRKLLDETGHDETLFPMLIPENLLAKEGEHIKGFEDEVFWVTHGGKTPLEVKLALRPTSETTMYYMMKQWIKVHTDLPLKLYQVVNTFRYETKHTRPLIRLREIMSFKEAHTAHATKEDCDAQIKEALNLYGEFFDEICVPYIISKRPEWDKFPGADYTMAFDTIYPDGKTMQIGTVHNLGQNFAKTFELEFETPDGEKDFVYQTCYGISDRAIASLISVHGDEKGLVIPVDVAPIQIVLIPLLFKGKEEIVMEKIKELNSTLKSEFRVHLDDRDIRPGRKYNDWEIKGVPLRIELGPRDIENGQALIVRRDTGEKITVEYSNILEEVEKIVSMYKENLKIKADEKIKNFLTVVDFESDVNALSEKVKAALLENKGIILIPFDESVYNEEFEELIDASVLGQTTYEGKDYISVARTY.

It belongs to the class-II aminoacyl-tRNA synthetase family. ProS type 3 subfamily. In terms of assembly, homodimer.

It localises to the cytoplasm. The catalysed reaction is tRNA(Pro) + L-proline + ATP = L-prolyl-tRNA(Pro) + AMP + diphosphate. Catalyzes the attachment of proline to tRNA(Pro) in a two-step reaction: proline is first activated by ATP to form Pro-AMP and then transferred to the acceptor end of tRNA(Pro). This is Proline--tRNA ligase from Methanococcus maripaludis (strain C7 / ATCC BAA-1331).